The primary structure comprises 486 residues: Aspartyl/glutamyl-tRNA(Asn/Gln) amidotransferase subunit B (486 aa).

The protein belongs to the GatB/GatE family. GatB subfamily. Heterotrimer of A, B and C subunits.

The enzyme catalyses L-glutamyl-tRNA(Gln) + L-glutamine + ATP + H2O = L-glutaminyl-tRNA(Gln) + L-glutamate + ADP + phosphate + H(+). The catalysed reaction is L-aspartyl-tRNA(Asn) + L-glutamine + ATP + H2O = L-asparaginyl-tRNA(Asn) + L-glutamate + ADP + phosphate + 2 H(+). Allows the formation of correctly charged Asn-tRNA(Asn) or Gln-tRNA(Gln) through the transamidation of misacylated Asp-tRNA(Asn) or Glu-tRNA(Gln) in organisms which lack either or both of asparaginyl-tRNA or glutaminyl-tRNA synthetases. The reaction takes place in the presence of glutamine and ATP through an activated phospho-Asp-tRNA(Asn) or phospho-Glu-tRNA(Gln). This Orientia tsutsugamushi (strain Boryong) (Rickettsia tsutsugamushi) protein is Aspartyl/glutamyl-tRNA(Asn/Gln) amidotransferase subunit B.